We begin with the raw amino-acid sequence, 295 residues long: Multistep phosphorelay regulator 1 (295 aa).

A disordered region spans residues 89–110 (KSENNQQLAANETAGAPEGTEE). Residues 97–106 (AANETAGAPE) show a composition bias toward low complexity. Residues 182-284 (EHEFSKSIVW…NDFYKDARAY (103 aa)) form the HPt domain. Phosphohistidine is present on His221.

Its function is as follows. Binds to the msc4 response regulator which is part of a multistep phosphorelay system that transmits oxidative stress signals to the spc1 MAPK cascade. In Schizosaccharomyces pombe (strain 972 / ATCC 24843) (Fission yeast), this protein is Multistep phosphorelay regulator 1 (mpr1).